The chain runs to 415 residues: Gamma-glutamyl phosphate reductase (415 aa).

This sequence belongs to the gamma-glutamyl phosphate reductase family.

It localises to the cytoplasm. The enzyme catalyses L-glutamate 5-semialdehyde + phosphate + NADP(+) = L-glutamyl 5-phosphate + NADPH + H(+). The protein operates within amino-acid biosynthesis; L-proline biosynthesis; L-glutamate 5-semialdehyde from L-glutamate: step 2/2. Functionally, catalyzes the NADPH-dependent reduction of L-glutamate 5-phosphate into L-glutamate 5-semialdehyde and phosphate. The product spontaneously undergoes cyclization to form 1-pyrroline-5-carboxylate. This Shouchella clausii (strain KSM-K16) (Alkalihalobacillus clausii) protein is Gamma-glutamyl phosphate reductase.